The sequence spans 358 residues: MSRLETFYDVMRRQGITRRSFLKYCSLTAAALGLGPAFAPRIAHAMETKPRTPVLWLHGLECTCCSESFIRSAHPLVKDVVLSMISLDYDDTLMAAAGHQAEAALEETMRKYKGEYILAVEGNPPLNEDGMFCIVGGKPFIEQLRHVAKDAKAVIAWGSCASWGCVQAARPNPTQAVPIHKVITDKPIVKVPGCPPIAEVMTGVITYMLTFGKLPELDRQGRPKMFYGQRIHDKCYRRPHFDAGQFVEHWDDEGARKGYCLYKVGCKGPTSYNACSTVRWNEGTSFPIQAGHGCIGCSEDGFWDKGSFYERLTTIPQFGIEKNADEIGAAVAGGVGAAIAAHAAVTAIKRLQNKGDRP.

The tat-type signal signal peptide spans 1–45 (MSRLETFYDVMRRQGITRRSFLKYCSLTAAALGLGPAFAPRIAHA). Residues cysteine 62, cysteine 65, cysteine 160, cysteine 194, histidine 232, cysteine 235, cysteine 260, and cysteine 266 each coordinate [4Fe-4S] cluster. [3Fe-4S] cluster is bound by residues cysteine 275, cysteine 294, and cysteine 297.

This sequence belongs to the [NiFe]/[NiFeSe] hydrogenase small subunit family. Heterodimer of a large and a small subunit. The cofactor is [4Fe-4S] cluster. It depends on [3Fe-4S] cluster as a cofactor. Post-translationally, predicted to be exported by the Tat system. The position of the signal peptide cleavage has been experimentally proven.

It is found in the cell membrane. It carries out the reaction H2 + A = AH2. In terms of biological role, this enzyme recycles the H(2) produced by nitrogenase to increase the production of ATP and to protect nitrogenase against inhibition or damage by O(2) under carbon- or phosphate-limited conditions. The protein is Uptake hydrogenase small subunit (hoxK) of Azotobacter vinelandii.